The primary structure comprises 132 residues: Small ribosomal subunit protein uS11 (132 aa).

This sequence belongs to the universal ribosomal protein uS11 family. Part of the 30S ribosomal subunit. Interacts with proteins S7 and S18. Binds to IF-3.

Functionally, located on the platform of the 30S subunit, it bridges several disparate RNA helices of the 16S rRNA. Forms part of the Shine-Dalgarno cleft in the 70S ribosome. This chain is Small ribosomal subunit protein uS11, found in Chlamydia trachomatis serovar D (strain ATCC VR-885 / DSM 19411 / UW-3/Cx).